The following is a 555-amino-acid chain: Membrane protein insertase YidC (555 aa).

Residues 7–24 (ILWVIFSMSLVLLYDNWQ) form a helical membrane-spanning segment. The disordered stretch occupies residues 62-81 (APGAAGTAAPAAPQAAAQPT). The next 5 membrane-spanning stretches (helical) occupy residues 334 to 354 (LELV…FWLL), 360 to 380 (FLGN…LVFF), 430 to 450 (LGGC…YWVL), 468 to 488 (LSVP…MFVQ), and 503 to 523 (VMMI…AGLV).

Belongs to the OXA1/ALB3/YidC family. Type 1 subfamily. In terms of assembly, interacts with the Sec translocase complex via SecD. Specifically interacts with transmembrane segments of nascent integral membrane proteins during membrane integration.

The protein localises to the cell inner membrane. In terms of biological role, required for the insertion and/or proper folding and/or complex formation of integral membrane proteins into the membrane. Involved in integration of membrane proteins that insert both dependently and independently of the Sec translocase complex, as well as at least some lipoproteins. Aids folding of multispanning membrane proteins. This chain is Membrane protein insertase YidC, found in Cupriavidus necator (strain ATCC 17699 / DSM 428 / KCTC 22496 / NCIMB 10442 / H16 / Stanier 337) (Ralstonia eutropha).